The following is a 47-amino-acid chain: Protein YtiD (47 aa).

This is Protein YtiD (ytiD) from Escherichia coli (strain K12).